We begin with the raw amino-acid sequence, 253 residues long: 5'/3'-nucleotidase SurE (253 aa).

The a divalent metal cation site is built by aspartate 8, aspartate 9, serine 39, and asparagine 92.

The protein belongs to the SurE nucleotidase family. It depends on a divalent metal cation as a cofactor.

The protein resides in the cytoplasm. The catalysed reaction is a ribonucleoside 5'-phosphate + H2O = a ribonucleoside + phosphate. It carries out the reaction a ribonucleoside 3'-phosphate + H2O = a ribonucleoside + phosphate. The enzyme catalyses [phosphate](n) + H2O = [phosphate](n-1) + phosphate + H(+). Nucleotidase with a broad substrate specificity as it can dephosphorylate various ribo- and deoxyribonucleoside 5'-monophosphates and ribonucleoside 3'-monophosphates with highest affinity to 3'-AMP. Also hydrolyzes polyphosphate (exopolyphosphatase activity) with the preference for short-chain-length substrates (P20-25). Might be involved in the regulation of dNTP and NTP pools, and in the turnover of 3'-mononucleotides produced by numerous intracellular RNases (T1, T2, and F) during the degradation of various RNAs. This chain is 5'/3'-nucleotidase SurE, found in Salmonella paratyphi A (strain AKU_12601).